The primary structure comprises 165 residues: Adenosine 5'-monophosphoramidase HINT3 (165 aa).

Positions 1–23 (MAEKQAGLVGEPDPEGSSPGTSE) are disordered. Ala2 carries the post-translational modification N-acetylalanine. The HIT domain maps to 32–143 (VFCRVAAGQE…PVKEFGFLSK (112 aa)). AMP-binding positions include 59–60 (DI) and 128–130 (HLH). The Histidine triad motif motif lies at 126 to 130 (HLHLH). His128 (tele-AMP-histidine intermediate) is an active-site residue.

Belongs to the HINT family. As to quaternary structure, forms dimers to octamers and even larger oligomer. Interacts with CALM1.

It localises to the cytoplasm. The protein resides in the nucleus. It catalyses the reaction adenosine 5'-phosphoramidate + H2O = AMP + NH4(+). Its function is as follows. Exhibits adenosine 5'-monophosphoramidase activity, hydrolyzing purine nucleotide phosphoramidates with a single phosphate group such as adenosine 5'monophosphoramidate (AMP-NH2) to yield AMP and NH2. Hydrolyzes lysyl-AMP (AMP-N-epsilon-(N-alpha-acetyl lysine methyl ester)) generated by lysine tRNA ligase. This Mus musculus (Mouse) protein is Adenosine 5'-monophosphoramidase HINT3 (Hint3).